A 441-amino-acid polypeptide reads, in one-letter code: 4-hydroxy-3-methylbut-2-en-1-yl diphosphate synthase (flavodoxin) (441 aa).

[4Fe-4S] cluster is bound by residues Cys-320, Cys-323, Cys-366, and Glu-373.

It belongs to the IspG family. It depends on [4Fe-4S] cluster as a cofactor.

It carries out the reaction (2E)-4-hydroxy-3-methylbut-2-enyl diphosphate + oxidized [flavodoxin] + H2O + 2 H(+) = 2-C-methyl-D-erythritol 2,4-cyclic diphosphate + reduced [flavodoxin]. Its pathway is isoprenoid biosynthesis; isopentenyl diphosphate biosynthesis via DXP pathway; isopentenyl diphosphate from 1-deoxy-D-xylulose 5-phosphate: step 5/6. In terms of biological role, converts 2C-methyl-D-erythritol 2,4-cyclodiphosphate (ME-2,4cPP) into 1-hydroxy-2-methyl-2-(E)-butenyl 4-diphosphate. This Rhodopseudomonas palustris (strain ATCC BAA-98 / CGA009) protein is 4-hydroxy-3-methylbut-2-en-1-yl diphosphate synthase (flavodoxin).